The sequence spans 117 residues: Large ribosomal subunit protein bL17 (117 aa).

This sequence belongs to the bacterial ribosomal protein bL17 family. As to quaternary structure, part of the 50S ribosomal subunit. Contacts protein L32.

The polypeptide is Large ribosomal subunit protein bL17 (Endomicrobium trichonymphae).